The primary structure comprises 1085 residues: Error-prone DNA polymerase (1085 aa).

It belongs to the DNA polymerase type-C family. DnaE2 subfamily.

It localises to the cytoplasm. It carries out the reaction DNA(n) + a 2'-deoxyribonucleoside 5'-triphosphate = DNA(n+1) + diphosphate. Its function is as follows. DNA polymerase involved in damage-induced mutagenesis and translesion synthesis (TLS). It is not the major replicative DNA polymerase. This Symbiobacterium thermophilum (strain DSM 24528 / JCM 14929 / IAM 14863 / T) protein is Error-prone DNA polymerase.